The sequence spans 123 residues: Ribosome-binding factor A (123 aa).

This sequence belongs to the RbfA family. In terms of assembly, monomer. Binds 30S ribosomal subunits, but not 50S ribosomal subunits or 70S ribosomes.

It localises to the cytoplasm. Its function is as follows. One of several proteins that assist in the late maturation steps of the functional core of the 30S ribosomal subunit. Associates with free 30S ribosomal subunits (but not with 30S subunits that are part of 70S ribosomes or polysomes). Required for efficient processing of 16S rRNA. May interact with the 5'-terminal helix region of 16S rRNA. The chain is Ribosome-binding factor A from Legionella pneumophila (strain Lens).